A 319-amino-acid chain; its full sequence is Thioredoxin reductase (319 aa).

Residues 11-14 (SGPA), 40-41 (IA), Gln-45, Asn-54, Cys-145, Asp-288, and 295-297 (RQA) contribute to the FAD site. Cys-142 and Cys-145 are disulfide-bonded.

This sequence belongs to the class-II pyridine nucleotide-disulfide oxidoreductase family. Homodimer. The cofactor is FAD.

Its subcellular location is the cytoplasm. The catalysed reaction is [thioredoxin]-dithiol + NADP(+) = [thioredoxin]-disulfide + NADPH + H(+). This Candida glabrata (strain ATCC 2001 / BCRC 20586 / JCM 3761 / NBRC 0622 / NRRL Y-65 / CBS 138) (Yeast) protein is Thioredoxin reductase (TRR1).